The primary structure comprises 727 residues: Iron-sulfur clusters transporter ATM1, mitochondrial (727 aa).

A mitochondrion-targeting transit peptide spans methionine 1–arginine 25. The Mitochondrial matrix segment spans residues serine 26–arginine 138. Residues lysine 87–threonine 107 are disordered. The segment covering leucine 90–threonine 107 has biased composition (basic and acidic residues). Residues valine 139–phenylalanine 160 form a helical membrane-spanning segment. In terms of domain architecture, ABC transmembrane type-1 spans valine 139–glutamine 429. Topologically, residues lysine 161–glycine 183 are mitochondrial intermembrane. Residues leucine 184–phenylalanine 207 form a helical membrane-spanning segment. The Mitochondrial matrix segment spans residues alanine 208 to valine 256. Residues leucine 257–tyrosine 280 traverse the membrane as a helical segment. A topological domain (mitochondrial intermembrane) is located at residue glutamine 281. Residues phenylalanine 282–isoleucine 302 form a helical membrane-spanning segment. The Mitochondrial matrix portion of the chain corresponds to arginine 303–alanine 368. Glutathione is bound by residues arginine 308–arginine 312 and asparagine 371–glutamine 374. Residues phenylalanine 369–tyrosine 387 form a helical membrane-spanning segment. The Mitochondrial intermembrane segment spans residues methionine 388 to aspartate 402. The helical transmembrane segment at leucine 403 to tyrosine 424 threads the bilayer. Glycine 421 lines the glutathione pocket. At arginine 425 to isoleucine 727 the chain is on the mitochondrial matrix side. Residues isoleucine 465–arginine 701 enclose the ABC transporter domain. ATP-binding positions include tyrosine 474 and glycine 498–lysine 509.

This sequence belongs to the ABC transporter superfamily. ABCB family. Heavy Metal importer (TC 3.A.1.210) subfamily. As to quaternary structure, homodimer.

Its subcellular location is the mitochondrion inner membrane. Performs an essential function in the generation of cytoplasmic iron-sulfur proteins by mediating the ATP-dependent export of Fe/S cluster precursors synthesized by NFS1 and other mitochondrial proteins. Hydrolyzes ATP. Binds glutathione and may function by transporting a glutathione-conjugated iron-sulfur compound. The sequence is that of Iron-sulfur clusters transporter ATM1, mitochondrial from Candida glabrata (strain ATCC 2001 / BCRC 20586 / JCM 3761 / NBRC 0622 / NRRL Y-65 / CBS 138) (Yeast).